The sequence spans 455 residues: Keratin, type I cuticular Ha5 (455 aa).

Residues 1–97 form a head region; the sequence is MASKCLKASF…FGEGILTGNE (97 aa). In terms of domain architecture, IF rod spans 97–408; that stretch reads EKETMQFLND…GLLDSEDCKL (312 aa). Residues 98 to 132 form a coil 1A region; the sequence is KETMQFLNDRLASYLEKVRQLERENAELESRIRDW. The segment at 133 to 143 is linker 1; the sequence is CEQQVPYLCPD. The tract at residues 144–244 is coil 1B; it reads YQSYFQTIEE…HEEEVNSLRC (101 aa). Residues 245–260 form a linker 12 region; it reads QLGDRLNVEVDAAPPV. The segment at 261-404 is coil 2; the sequence is DLNRVLNEMR…STYRGLLDSE (144 aa). The tail stretch occupies residues 405–455; the sequence is DCKLPCNPCAPDHSPSKSCLPCLPAASCGPGTAHTTCSPRPICVSCPGSRF.

Belongs to the intermediate filament family.

In Ovis aries (Sheep), this protein is Keratin, type I cuticular Ha5.